The primary structure comprises 198 residues: Guanylate kinase (198 aa).

N-acetylglycine is present on glycine 2. The Guanylate kinase-like domain maps to proline 4 to serine 186. An ATP-binding site is contributed by glycine 14–threonine 19. Serine 37–lysine 51 provides a ligand contact to substrate. Residues arginine 44, arginine 137, and arginine 148 contribute to the active site. Residue asparagine 171–aspartate 172 coordinates ATP.

Belongs to the guanylate kinase family. Monomer. Interacts with RD3.

The protein localises to the photoreceptor inner segment. It localises to the cytoplasm. It is found in the cytosol. It catalyses the reaction GMP + ATP = GDP + ADP. With respect to regulation, up-regulated by RD3. Its function is as follows. Catalyzes the phosphorylation of GMP to GDP. Essential enzyme for recycling GMP and indirectly, cyclic GMP (cGMP). Involved in the cGMP metabolism in photoreceptors. This Sus scrofa (Pig) protein is Guanylate kinase (GUK1).